The following is a 387-amino-acid chain: MATKKKTNFDDITKKYGAERDKALADALALIEKDFGKGSLMRLGEAANQKVSVVSSGSLALDIALGAGGYPKGRIVEIYGPESSGKTTVALHAVAAVQKEGGIAAFIDAENALDPEYAKALGVNIDELLLSQPDYGEQGLQIAEKLITSGAVDLVVIDSVAALVPKAEIDGEIGDSSVGLQARMMSQAMRKLAGHINKTKTTAIFINQLREKVGVMFGSPETTPGGRALKFYASVRLDVRGSTKIEEGSGDNKTQIGKITKIKVVKNKVAPPFKVALVDIMFGEGISRTGELLNIAVDEGIIKKSGAWFAYNDEKIGQGAEKAKNYLKEHQEIFDEIDHKVRTAHGLLDEAEVAETTEDTSTKAKATKAKKEEKVVETEEIELELED.

ATP is bound at residue 80 to 87 (GPESSGKT). The interval 352–387 (EVAETTEDTSTKAKATKAKKEEKVVETEEIELELED) is disordered. Residues 378–387 (TEEIELELED) show a composition bias toward acidic residues.

It belongs to the RecA family.

Its subcellular location is the cytoplasm. Its function is as follows. Can catalyze the hydrolysis of ATP in the presence of single-stranded DNA, the ATP-dependent uptake of single-stranded DNA by duplex DNA, and the ATP-dependent hybridization of homologous single-stranded DNAs. It interacts with LexA causing its activation and leading to its autocatalytic cleavage. The protein is Protein RecA, chromosomal of Lactococcus lactis subsp. lactis (strain IL1403) (Streptococcus lactis).